Consider the following 132-residue polypeptide: L-ectoine synthase (132 aa).

Belongs to the ectoine synthase family.

It catalyses the reaction (2S)-4-acetamido-2-aminobutanoate = L-ectoine + H2O. It functions in the pathway amine and polyamine biosynthesis; ectoine biosynthesis; L-ectoine from L-aspartate 4-semialdehyde: step 3/3. Functionally, catalyzes the circularization of gamma-N-acetyl-alpha,gamma-diaminobutyric acid (ADABA) to ectoine (1,4,5,6-tetrahydro-2-methyl-4-pyrimidine carboxylic acid), which is an excellent osmoprotectant. The chain is L-ectoine synthase from Hahella chejuensis (strain KCTC 2396).